The chain runs to 388 residues: Pyruvate dehydrogenase E1 component subunit alpha, testis-specific form, mitochondrial (388 aa).

Residues 1-27 (MLAAFISRVLRRVAQKSARRVLVASRN) constitute a mitochondrion transit peptide. Residues histidine 90, tyrosine 116, arginine 117, glycine 163, valine 165, aspartate 194, glycine 195, alanine 196, asparagine 223, and tyrosine 225 each contribute to the pyruvate site. Residues tyrosine 116, arginine 117, glycine 163, valine 165, aspartate 194, glycine 195, alanine 196, and asparagine 223 each contribute to the thiamine diphosphate site. Residue aspartate 194 coordinates Mg(2+). 2 residues coordinate Mg(2+): asparagine 223 and tyrosine 225. A thiamine diphosphate-binding site is contributed by histidine 290. Serine 291 carries the post-translational modification Phosphoserine; by PDK1, PDK2, PDK3 and PDK4. Residue serine 293 is modified to Phosphoserine. Serine 298 bears the Phosphoserine; by PDK3 mark.

Heterotetramer of two PDHA2 and two PDHB subunits. The heterotetramer interacts with DLAT, and is part of the multimeric pyruvate dehydrogenase complex that contains multiple copies of pyruvate dehydrogenase (E1), dihydrolipoamide acetyltransferase (DLAT, E2) and lipoamide dehydrogenase (DLD, E3). These subunits are bound to an inner core composed of about 48 DLAT and 12 PDHX molecules. The cofactor is thiamine diphosphate. Requires Mg(2+) as cofactor. Phosphorylation at Ser-291, Ser-293 and Ser-298 by PDK family kinases inactivates the enzyme; for this phosphorylation at a single site is sufficient. Phosphorylation at Ser-293 interferes with access to active site, and thereby inactivates the enzyme. Dephosphorylation at all three sites, i.e. at Ser-291, Ser-293 and Ser-298, is required for reactivation. In terms of tissue distribution, testis. Expressed in postmeiotic spermatogenic cells.

It localises to the mitochondrion matrix. It carries out the reaction N(6)-[(R)-lipoyl]-L-lysyl-[protein] + pyruvate + H(+) = N(6)-[(R)-S(8)-acetyldihydrolipoyl]-L-lysyl-[protein] + CO2. Its activity is regulated as follows. Pyruvate dehydrogenase activity is inhibited by phosphorylation of PDHA2; it is reactivated by dephosphorylation. Its function is as follows. The pyruvate dehydrogenase complex catalyzes the overall conversion of pyruvate to acetyl-CoA and CO(2), and thereby links the glycolytic pathway to the tricarboxylic cycle. The protein is Pyruvate dehydrogenase E1 component subunit alpha, testis-specific form, mitochondrial (PDHA2) of Homo sapiens (Human).